A 347-amino-acid polypeptide reads, in one-letter code: UDP-3-O-acylglucosamine N-acyltransferase 1 (347 aa).

The active-site Proton acceptor is the His246.

Belongs to the transferase hexapeptide repeat family. LpxD subfamily. In terms of assembly, homotrimer.

The catalysed reaction is a UDP-3-O-[(3R)-3-hydroxyacyl]-alpha-D-glucosamine + a (3R)-hydroxyacyl-[ACP] = a UDP-2-N,3-O-bis[(3R)-3-hydroxyacyl]-alpha-D-glucosamine + holo-[ACP] + H(+). It participates in bacterial outer membrane biogenesis; LPS lipid A biosynthesis. Catalyzes the N-acylation of UDP-3-O-acylglucosamine using 3-hydroxyacyl-ACP as the acyl donor. Is involved in the biosynthesis of lipid A, a phosphorylated glycolipid that anchors the lipopolysaccharide to the outer membrane of the cell. The sequence is that of UDP-3-O-acylglucosamine N-acyltransferase 1 from Francisella tularensis subsp. holarctica (strain LVS).